A 149-amino-acid chain; its full sequence is MKCPFCSHSETQVVETRISEDGDSIRRRRQCASCQKRFTTYERPDVAFPAIVKKDGRRIEYERAKLLASMTLALRKRPVSTEQVDGAVERIEEKLLMQGVRELPSARLGELVMRELKKLDKVAYVRFASVYRSFEDIDEFKTLVDEVRR.

A zinc finger spans residues Cys-3–Cys-34. One can recognise an ATP-cone domain in the interval Pro-49–Glu-139.

The protein belongs to the NrdR family. Zn(2+) is required as a cofactor.

Negatively regulates transcription of bacterial ribonucleotide reductase nrd genes and operons by binding to NrdR-boxes. This is Transcriptional repressor NrdR from Albidiferax ferrireducens (strain ATCC BAA-621 / DSM 15236 / T118) (Rhodoferax ferrireducens).